The sequence spans 115 residues: Large ribosomal subunit protein bL19 (115 aa).

It belongs to the bacterial ribosomal protein bL19 family.

Functionally, this protein is located at the 30S-50S ribosomal subunit interface and may play a role in the structure and function of the aminoacyl-tRNA binding site. The chain is Large ribosomal subunit protein bL19 from Oleidesulfovibrio alaskensis (strain ATCC BAA-1058 / DSM 17464 / G20) (Desulfovibrio alaskensis).